Consider the following 228-residue polypeptide: MADS-box transcription factor 22 (228 aa).

Residues 1-61 (MARERREIKR…GKLSHFASSS (61 aa)) enclose the MADS-box domain. A K-box domain is found at 86-176 (LNLEHSKYAH…RNQVSQISPA (91 aa)). Positions 189-217 (EGQSSESVMTALHSGSSQSQDNDDGSDVS) are disordered.

Expressed in palea and stamen primordia. Expressed in shoots and coleoptiles.

It localises to the nucleus. Its function is as follows. Probable transcription factor. May be required for spikelet (rice flower) development. Transcription factor that functions to support the MADS55 in its function as negative regulator of brassinosteroid signaling. This chain is MADS-box transcription factor 22 (MADS22), found in Oryza sativa subsp. japonica (Rice).